The following is a 530-amino-acid chain: MACTGWTSPLPLCVCLLLTCGFAEAGKLLVVPMDGSHWFTMRSVVEKLILRGHEVVVVMPEVSWQLGRSLNCTVKTYSTSYTLEDLDREFKAFAHAQWKAQVRSIYSLLMGSYNDIFDLFFSNCRSLFKDKKLVEYLKESSFDAVFLDPFDNCGLIVAKYFSLPSVVFARGILCHYLEEGAQCPAPLSYVPRILLGFSDAMTFKERVRNHIMHLEEHLLCHRFFKNALEIASEILQTPVTEYDLYSHTSIWLLRTDFVLDYPKPVMPNMIFIGGINCHQGKPLPMEFEAYINASGEHGIVVFSLGSMVSEIPEKKAMAIADALGKIPQTVLWRYTGTRPSNLANNTILVKWLPQNDLLGHPMTRAFITHAGSHGVYESICNGVPMVMMPLFGDQMDNAKRMETKGAGVTLNVLEMTSEDLENALKAVINDKSYKENIMRLSSLHKDRPVEPLDLAVFWVEFVMRHKGAPHLRPAAHDLTWYQYHSLDVIGFLLAVVLTVAFITFKCCAYGYRKCLGKKGRVKKAHKSKTH.

A signal peptide spans 1 to 25 (MACTGWTSPLPLCVCLLLTCGFAEA). N71 carries an N-linked (GlcNAc...) asparagine glycan. At K99 the chain carries N6-succinyllysine. N292 and N344 each carry an N-linked (GlcNAc...) asparagine glycan. Residues 488 to 504 (VIGFLLAVVLTVAFITF) form a helical membrane-spanning segment.

The protein belongs to the UDP-glycosyltransferase family. As to quaternary structure, homodimer. Homooligomer. Interacts with UGT1A1, UGT1A3, UGT1A4, UGT1A6, UGT1A7, UGT1A8 and UGT1A10 to form heterodimers. Isoform 1 interacts with isoform 2/i2 suggesting that oligomerization is involved in negative regulation of transferase activity by isoform 2. Isoform 1 also interacts with respective i2 isoforms of UGT1A1, UGT1A3, UGT1A4, UGT1A6, UGT1A7, UGT1A8 and UGT1A10. Expressed in liver, kidney, colon, esophagus and small intestine.

The protein localises to the endoplasmic reticulum membrane. The catalysed reaction is glucuronate acceptor + UDP-alpha-D-glucuronate = acceptor beta-D-glucuronoside + UDP + H(+). It catalyses the reaction 2-hydroxy-17beta-estradiol + UDP-alpha-D-glucuronate = 2-hydroxy-17beta-estradiol 3-O-(beta-D-glucuronate) + UDP + H(+). The enzyme catalyses 4-hydroxy-17beta-estradiol + UDP-alpha-D-glucuronate = 17beta-estradiol 4-O-(beta-D-glucuronate) + UDP + H(+). It carries out the reaction 2-hydroxyestrone + UDP-alpha-D-glucuronate = 2-hydroxyestrone 3-O-(beta-D-glucuronate) + UDP + H(+). The catalysed reaction is 4-hydroxyestrone + UDP-alpha-D-glucuronate = estrone 4-O-(beta-D-glucuronate) + UDP + H(+). It catalyses the reaction prunetin + UDP-alpha-D-glucuronate = prunetin-5-O-beta-D-glucuronide + UDP. The enzyme catalyses 8-iso-prostaglandin F2alpha + UDP-alpha-D-glucuronate = 8-iso-prostaglandin F2alpha-glucuronide + UDP + H(+). It carries out the reaction 5-epi-5-F2t-IsoP + UDP-alpha-D-glucuronate = 5-epi-5-F2t-IsoP-glucuronide + UDP + H(+). The catalysed reaction is (5Z,8Z,11Z,14Z)-eicosatetraenoate + UDP-alpha-D-glucuronate = O-[(5Z),(8Z),(11Z),(14Z)-eicosatetraenoyl]-beta-D-glucuronate + UDP. It catalyses the reaction 15-hydroxy-(5Z,8Z,11Z,13E)-eicosatetraenoate + UDP-alpha-D-glucuronate = 15-O-(beta-D-glucuronosyl)-(5Z,8Z,11Z,14Z)-eicosatetraenoate + UDP + H(+). The enzyme catalyses prostaglandin B1 + UDP-alpha-D-glucuronate = 15-O-(beta-D-glucuronosyl)-prostaglandin B1 + UDP + H(+). It carries out the reaction (E)-ferulate + UDP-alpha-D-glucuronate = (E)-4-O-(beta-D-glucuronosyl)-ferulate + UDP + H(+). The catalysed reaction is (E)-ferulate + UDP-alpha-D-glucuronate = (E)-ferulic acid beta-D-glucuronate ester + UDP. It catalyses the reaction candesartan + UDP-alpha-D-glucuronate = candesartan O-beta-D-glucuronoside + UDP. The enzyme catalyses SN-38 + UDP-alpha-D-glucuronate = SN-38 O-beta-D-glucuronide + UDP + H(+). It carries out the reaction mycophenolate + UDP-alpha-D-glucuronate = mycophenolate 7-O-beta-D-glucuronide + UDP + H(+). Its function is as follows. UDP-glucuronosyltransferase (UGT) that catalyzes phase II biotransformation reactions in which lipophilic substrates are conjugated with glucuronic acid to increase the metabolite's water solubility, thereby facilitating excretion into either the urine or bile. Essential for the elimination and detoxification of drugs, xenobiotics and endogenous compounds. Catalyzes the glucuronidation of endogenous estrogen hormones such as estradiol and estrone. Involved in the glucuronidation of arachidonic acid (AA) and AA-derived eicosanoids including 15-HETE, PGB1 and F2-isoprostanes (8-iso-PGF2alpha and 5-epi-5-F2t-IsoP). Glucuronates the phytochemical ferulic acid efficently at both the phenolic or the carboxylic acid group. Also catalyzes the glucuronidation of the isoflavones genistein, daidzein, glycitein, formononetin, biochanin A and prunetin, which are phytoestrogens with anticancer and cardiovascular properties. Involved in the glucuronidation of the AGTR1 angiotensin receptor antagonist caderastan, a drug which can inhibit the effect of angiotensin II. Involved in the biotransformation of 7-ethyl-10-hydroxycamptothecin (SN-38), the pharmacologically active metabolite of the anticancer drug irinotecan. Also metabolizes mycophenolate, an immunosuppressive agent. In terms of biological role, lacks UGT glucuronidation activity but acts as a negative regulator of isoform 1. The chain is UDP-glucuronosyltransferase 1A9 from Homo sapiens (Human).